The chain runs to 1196 residues: Ice nucleation protein (1196 aa).

Positions 172–1147 are octapeptide periodicity; it reads ATYGSTLSGD…LSAGEDSTLI (976 aa). 3 disordered regions span residues 269-304, 319-352, and 415-442; these read GYGSTQTSGEDSSLTAGYGSTQTAQEGSNLTAGYGS, GSTQTSGGDSSLTAGYGSTQTAQEGSNLTSGYGS, and GSTQTSGSDSSLTAGYGSTQTAQEGSNL. 2 stretches are compositionally biased toward polar residues: residues 271 to 298 and 319 to 346; these read GSTQTSGEDSSLTAGYGSTQTAQEGSNL and GSTQTSGGDSSLTAGYGSTQTAQEGSNL.

The protein belongs to the bacterial ice nucleation protein family. As to quaternary structure, membrane environment or aggregation seems to be required for ice nucleation activity.

The protein localises to the cell outer membrane. In terms of biological role, ice nucleation proteins enable bacteria to nucleate crystallization in supercooled water. This Pseudomonas syringae protein is Ice nucleation protein (inaV).